We begin with the raw amino-acid sequence, 59 residues long: Large ribosomal subunit protein bL32 (59 aa).

The interval 1-24 (MAVQQNKKSPSKRGMHRSHDFLTS) is disordered.

It belongs to the bacterial ribosomal protein bL32 family.

The polypeptide is Large ribosomal subunit protein bL32 (Ralstonia nicotianae (strain ATCC BAA-1114 / GMI1000) (Ralstonia solanacearum)).